The primary structure comprises 192 residues: UPF0312 protein PC1_2518 (192 aa).

An N-terminal signal peptide occupies residues 1 to 23 (MLKKTLLSLTAVSMLASAGSALA).

It belongs to the UPF0312 family. Type 1 subfamily.

The protein localises to the periplasm. This is UPF0312 protein PC1_2518 from Pectobacterium carotovorum subsp. carotovorum (strain PC1).